The primary structure comprises 227 residues: UPF0173 metal-dependent hydrolase Tlet_1100 (227 aa).

Belongs to the UPF0173 family.

In Pseudothermotoga lettingae (strain ATCC BAA-301 / DSM 14385 / NBRC 107922 / TMO) (Thermotoga lettingae), this protein is UPF0173 metal-dependent hydrolase Tlet_1100.